The sequence spans 1068 residues: Target of Nesh-SH3 (1068 aa).

Positions 1-21 are cleaved as a signal peptide; the sequence is MLSSLGCLLLCGSITLALGNA. N-linked (GlcNAc...) asparagine glycosylation occurs at N37. The region spanning 116–214 is the Fibronectin type-III 1 domain; sequence KPLQLVVGTL…KIFNHKTVVG (99 aa). Disordered regions lie at residues 315-351 and 384-811; these read SKTP…DVSE and VFSS…SITD. A compositionally biased stretch (low complexity) spans 326–339; that stretch reads RPTTVTPETVPRST. The segment covering 340–351 has biased composition (polar residues); that stretch reads KPTTSSALDVSE. Residues 447–462 show a composition bias toward low complexity; the sequence is QPTTPAPQQTTSIPST. The span at 463 to 473 shows a compositional bias: basic residues; that stretch reads PKRRPRPKPPR. Positions 482–499 are enriched in polar residues; it reads AGTITPKISKSPEPTWTT. Over residues 532 to 544 the composition is skewed to pro residues; the sequence is RAPPKPKTSPRPR. Over residues 562-574 the composition is skewed to polar residues; the sequence is PKTSPSPEVSYTT. Composition is skewed to low complexity over residues 603 to 631 and 737 to 750; these read IPFI…STQE and PPLR…GTPL. A compositionally biased stretch (polar residues) spans 802 to 811; the sequence is PDNSPCSITD. The region spanning 833-926 is the Fibronectin type-III 2 domain; sequence PPTNLTVVTV…NTVAFSTESA (94 aa).

As to quaternary structure, probably interacts with ABI3. As to expression, expressed in brain, heart, lung, liver, pancreas kidney and placenta.

Its subcellular location is the secreted. In Homo sapiens (Human), this protein is Target of Nesh-SH3.